The sequence spans 104 residues: MNETEFHKLVDIQMQNIEEAIDESEADIDYEVTGNVMTLEFENRSQIIINRQEPMREIWLASKSGGFHFKLVDDKWTCSKTGMALFEMVKEECEKHADEEINWV.

It belongs to the frataxin family.

Its function is as follows. Involved in iron-sulfur (Fe-S) cluster assembly. May act as a regulator of Fe-S biogenesis. The polypeptide is Iron-sulfur cluster assembly protein CyaY (Vibrio atlanticus (strain LGP32) (Vibrio splendidus (strain Mel32))).